Consider the following 150-residue polypeptide: Large ribosomal subunit protein bL9 (150 aa).

The protein belongs to the bacterial ribosomal protein bL9 family.

Its function is as follows. Binds to the 23S rRNA. The protein is Large ribosomal subunit protein bL9 of Baumannia cicadellinicola subsp. Homalodisca coagulata.